The primary structure comprises 112 residues: MTQFSLNDIRPVDETGLSEKELSIKKEKDEIAKLLDRQENGFIIEKMVEEFGMSYLEATTAFLEENSIPETQFAKFIPSGIIEKIQSEAIDENLLRPSVVRCEKTNTLDFLL.

Residues 62–92 (FLEENSIPETQFAKFIPSGIIEKIQSEAIDE) form an interaction with host RNAP region. The tract at residues 106 to 112 (NTLDFLL) is involved in transcriptional enhancement.

It belongs to the Tevenvirinae late transcription coactivator family. Interacts with the beta subunit of host RNAP RpoB (via flap domain). Part of the transcription activation complex containing host RNAP, the viral RNA polymerase sigma-like factor, the coactivator gp33, and the sliding clamp.

Its function is as follows. Activates transcription at late promoters when the sliding clamp is present. Binds to both the host RNA polymerase (RNAP) and the upstream dsDNA. The protein is Late transcription coactivator (33) of Enterobacteria phage T4 (Bacteriophage T4).